The chain runs to 496 residues: UDP-N-acetylmuramate--L-alanine ligase (496 aa).

122-128 is a binding site for ATP; the sequence is GTHGKTT.

The protein belongs to the MurCDEF family.

Its subcellular location is the cytoplasm. It carries out the reaction UDP-N-acetyl-alpha-D-muramate + L-alanine + ATP = UDP-N-acetyl-alpha-D-muramoyl-L-alanine + ADP + phosphate + H(+). Its pathway is cell wall biogenesis; peptidoglycan biosynthesis. Functionally, cell wall formation. The sequence is that of UDP-N-acetylmuramate--L-alanine ligase from Mycobacterium avium (strain 104).